A 304-amino-acid chain; its full sequence is Tyrosine recombinase XerC (304 aa).

A Core-binding (CB) domain is found at 2 to 88; it reads ANVKNFLTLF…ALRSFYKFLL (87 aa). The Tyr recombinase domain maps to 109–294; sequence RIPKFLYEKE…SKDMLRKTYM (186 aa). Catalysis depends on residues Arg-149, Lys-173, His-246, Arg-249, and His-272. Tyr-281 serves as the catalytic O-(3'-phospho-DNA)-tyrosine intermediate.

The protein belongs to the 'phage' integrase family. XerC subfamily. Forms a cyclic heterotetrameric complex composed of two molecules of XerC and two molecules of XerD.

It is found in the cytoplasm. Its function is as follows. Site-specific tyrosine recombinase, which acts by catalyzing the cutting and rejoining of the recombining DNA molecules. The XerC-XerD complex is essential to convert dimers of the bacterial chromosome into monomers to permit their segregation at cell division. It also contributes to the segregational stability of plasmids. The chain is Tyrosine recombinase XerC from Bacillus licheniformis (strain ATCC 14580 / DSM 13 / JCM 2505 / CCUG 7422 / NBRC 12200 / NCIMB 9375 / NCTC 10341 / NRRL NRS-1264 / Gibson 46).